The primary structure comprises 131 residues: Ribosome-binding factor A (131 aa).

The protein belongs to the RbfA family. Monomer. Binds 30S ribosomal subunits, but not 50S ribosomal subunits or 70S ribosomes.

The protein resides in the cytoplasm. In terms of biological role, one of several proteins that assist in the late maturation steps of the functional core of the 30S ribosomal subunit. Associates with free 30S ribosomal subunits (but not with 30S subunits that are part of 70S ribosomes or polysomes). Required for efficient processing of 16S rRNA. May interact with the 5'-terminal helix region of 16S rRNA. In Thermotoga maritima (strain ATCC 43589 / DSM 3109 / JCM 10099 / NBRC 100826 / MSB8), this protein is Ribosome-binding factor A.